Here is a 424-residue protein sequence, read N- to C-terminus: Myb family transcription factor RLI1 (424 aa).

The tract at residues Arg144 to Gln165 is disordered. The HTH myb-type domain occupies Ala238–Tyr298. The H-T-H motif DNA-binding region spans Pro269–Arg294. The stretch at Met326 to Ala391 forms a coiled coil. The short motif at Leu342 to Glu347 is the LHEQLE element.

Belongs to the MYB-CC family. As to quaternary structure, interacts with SPX1 and SPX2 in the nucleus; these interactions prevent binding to the promoters of target genes, thus regulating negatively leaf inclination in response to phosphate (Pi) starvation. Homodimer. Interacts with PHR2 in the nucleus. Mostly expressed in roots and leaves blades and, to a lower extent, in leaves sheaths, culms and panicles. Localized in leaves lamina joints. In terms of tissue distribution, expressed equally in shoots and roots. As to expression, mostly expressed in shoots and, to a lower extent, in roots.

Its subcellular location is the nucleus. Its function is as follows. Transcription factor binding to specific DNA sequences of target genes promoters, such as the motif R1BS 5'-NAKATNCN-3' and the motif P1BS 5'-GNATATNC-3' to trigger their expression. Nitrate-induced component involved in modulating phosphate (Pi) response and homeostasis together with PHR2; activates directly the expression of Pi starvation-induced (PSI) genes upon nitrate disponibility, thus triggering the nitrate-induced phosphate response (NIPR) promoting Pi uptake activity. Binds preferentially to the P1BS motif 5'-GNATATNC-3' in target genes promoters. Functionally, binds preferentially to the R1BS motif 5'-NAKATNCN-3' in target genes promoters, including several genes involved in the plant hormone signal transduction pathway. Involved in the shoot architecture; positively regulates leaf inclination by affecting lamina joint cell elongation via the direct promotion of ILI4/BU1 and BC1 genes expression, especially in response to phosphate (Pi) availability. Regulates both brassinolide (BL) biosynthesis and signaling by directly activating BL-biosynthesis and signaling genes. The chain is Myb family transcription factor RLI1 from Oryza sativa subsp. japonica (Rice).